We begin with the raw amino-acid sequence, 365 residues long: Succinate--CoA ligase [ADP-forming] subunit beta (365 aa).

In terms of domain architecture, ATP-grasp spans 9 to 230 (KEIFRAEGIS…EMEEYEPEEF (222 aa)). ATP contacts are provided by residues K45, 52–54 (GRG), E90, I93, and E98. Positions 190 and 203 each coordinate Mg(2+). Substrate-binding positions include N244 and 300 to 302 (GIT).

The protein belongs to the succinate/malate CoA ligase beta subunit family. In terms of assembly, heterotetramer of two alpha and two beta subunits. Mg(2+) serves as cofactor.

It carries out the reaction succinate + ATP + CoA = succinyl-CoA + ADP + phosphate. The catalysed reaction is GTP + succinate + CoA = succinyl-CoA + GDP + phosphate. The protein operates within carbohydrate metabolism; tricarboxylic acid cycle; succinate from succinyl-CoA (ligase route): step 1/1. In terms of biological role, succinyl-CoA synthetase functions in the citric acid cycle (TCA), coupling the hydrolysis of succinyl-CoA to the synthesis of either ATP or GTP and thus represents the only step of substrate-level phosphorylation in the TCA. The beta subunit provides nucleotide specificity of the enzyme and binds the substrate succinate, while the binding sites for coenzyme A and phosphate are found in the alpha subunit. The chain is Succinate--CoA ligase [ADP-forming] subunit beta from Methanothermobacter thermautotrophicus (strain ATCC 29096 / DSM 1053 / JCM 10044 / NBRC 100330 / Delta H) (Methanobacterium thermoautotrophicum).